We begin with the raw amino-acid sequence, 382 residues long: MAKEGEERKKEKKEKKERKERKRREAEELAVREKKISKKHKSKSKEEEKPEKSKKKSKKYEEVEEEEKSPSPSPSPKKSKESKKKHKRSSDESEEIVDSKPVTVPIVTIESDSDFEFDKEDIKNLLESYSKEELINLIYKTAEKGSKLISAVFESADRDSSQRNIFVRGLGWDTTHENLKAAFEVYGEITECSVVMDKDTGRAKGFGFVLFKTRKGARAALKNPEKRMYNRTVSCLPARPFNSGKPREQQQPVESVKIDLSHTGNQSEMALPGIDLGHGLDKGHQQQQNMSMYAGQNMPFYGHSQPPPGFNPMYGAMMGNPMVAGLQNYRMFGSGMMNQGPMMPPNHMGMVGQYVGDGNVNGVGAGAGAGAGFDGERAWYLR.

The segment at 1–99 (MAKEGEERKK…SDESEEIVDS (99 aa)) is disordered. Residues 10–22 (KEKKEKKERKERK) are compositionally biased toward basic residues. The span at 23–34 (RREAEELAVREK) shows a compositional bias: basic and acidic residues. Residues 163 to 248 (RNIFVRGLGW…RPFNSGKPRE (86 aa)) form the RRM domain.

It is found in the nucleus. Acts as a component of a complex regulating the turnover of mRNAs in the nucleus. Binds with high affinity to RNA molecules that contain U-rich sequences in 3'-UTRs. May function in complex with UBP1 and contribute to the stabilization of mRNAs in the nucleus. This chain is UBP1-associated proteins 1B (UBA1B), found in Arabidopsis thaliana (Mouse-ear cress).